A 60-amino-acid polypeptide reads, in one-letter code: Metallothionein (60 aa).

M1 is modified (N-acetylmethionine). The segment at 1 to 28 (MDPCECSKTGTCNCGGSCTCKNCSCTTC) is beta. The a divalent metal cation site is built by C4, C6, C12, C14, C18, C20, C23, C25, C28, C32, C33, C35, C36, C40, C43, C47, C49, C54, C58, and C59. The tract at residues 29–60 (TKSCCPCCPSGCPKCASGCVCKGKTCDTTCCQ) is alpha.

It belongs to the metallothionein superfamily. Type 1 family.

Its function is as follows. Metallothioneins have a high content of cysteine residues that bind various heavy metals. The protein is Metallothionein (mt) of Pseudopleuronectes americanus (Winter flounder).